Here is a 121-residue protein sequence, read N- to C-terminus: Basic phospholipase A2 homolog blK-PLA2 (121 aa).

7 cysteine pairs are disulfide-bonded: cysteine 26–cysteine 115, cysteine 28–cysteine 44, cysteine 43–cysteine 95, cysteine 49–cysteine 121, cysteine 50–cysteine 88, cysteine 57–cysteine 81, and cysteine 75–cysteine 86. An important for membrane-damaging activities in eukaryotes and bacteria; heparin-binding region spans residues 105-117 (KKYRYHLKPFCKK).

The protein belongs to the phospholipase A2 family. Group II subfamily. K49 sub-subfamily. As to quaternary structure, homodimer; non-covalently linked. Expressed by the venom gland.

It localises to the secreted. In terms of biological role, snake venom phospholipase A2 (PLA2) homolog that lacks enzymatic activity. Shows myotoxic and edema-inducing activities in vivo. A model of myotoxic mechanism has been proposed: an apo Lys49-PLA2 is activated by the entrance of a hydrophobic molecule (e.g. fatty acid) at the hydrophobic channel of the protein leading to a reorientation of a monomer. This reorientation causes a transition between 'inactive' to 'active' states, causing alignment of C-terminal and membrane-docking sites (MDoS) side-by-side and putting the membrane-disruption sites (MDiS) in the same plane, exposed to solvent and in a symmetric position for both monomers. The MDoS region stabilizes the toxin on membrane by the interaction of charged residues with phospholipid head groups. Subsequently, the MDiS region destabilizes the membrane with penetration of hydrophobic residues. This insertion causes a disorganization of the membrane, allowing an uncontrolled influx of ions (i.e. calcium and sodium), and eventually triggering irreversible intracellular alterations and cell death. The sequence is that of Basic phospholipase A2 homolog blK-PLA2 from Bothrops leucurus (Whitetail lancehead).